Reading from the N-terminus, the 180-residue chain is Large ribosomal subunit protein uL6 (180 aa).

Belongs to the universal ribosomal protein uL6 family. As to quaternary structure, part of the 50S ribosomal subunit.

In terms of biological role, this protein binds to the 23S rRNA, and is important in its secondary structure. It is located near the subunit interface in the base of the L7/L12 stalk, and near the tRNA binding site of the peptidyltransferase center. In Clostridioides difficile (strain 630) (Peptoclostridium difficile), this protein is Large ribosomal subunit protein uL6.